A 179-amino-acid polypeptide reads, in one-letter code: uncharacterized protein (179 aa).

This is an uncharacterized protein from Pasteurella multocida (strain Pm70).